We begin with the raw amino-acid sequence, 188 residues long: Ribosome maturation factor RimM (188 aa).

Positions 98–171 (EGEFFQGDLV…RIVIHPPEYV (74 aa)) constitute a PRC barrel domain.

This sequence belongs to the RimM family. As to quaternary structure, binds ribosomal protein uS19.

Its subcellular location is the cytoplasm. An accessory protein needed during the final step in the assembly of 30S ribosomal subunit, possibly for assembly of the head region. Essential for efficient processing of 16S rRNA. May be needed both before and after RbfA during the maturation of 16S rRNA. It has affinity for free ribosomal 30S subunits but not for 70S ribosomes. This is Ribosome maturation factor RimM from Myxococcus xanthus (strain DK1622).